The following is a 131-amino-acid chain: ER membrane protein complex subunit 5 (131 aa).

The Cytoplasmic portion of the chain corresponds to 1-3 (MAP). Residues 4 to 22 (SLWKGLVGIGLFALAHAAL) traverse the membrane as a helical segment. At 23–43 (SAAQHRSYMRLTEKEDESLPI) the chain is on the lumenal side. The helical transmembrane segment at 44 to 63 (DIVLQTLLAFAVTCYGIVHI) threads the bilayer. The Cytoplasmic portion of the chain corresponds to 64 to 131 (AGEFKDMDAT…KLRKLESLRR (68 aa)). At S120 the chain carries Phosphoserine.

It belongs to the membrane magnesium transporter (TC 1.A.67) family. Component of the ER membrane protein complex (EMC).

The protein resides in the endoplasmic reticulum membrane. It is found in the golgi apparatus membrane. Its subcellular location is the early endosome membrane. Part of the endoplasmic reticulum membrane protein complex (EMC) that enables the energy-independent insertion into endoplasmic reticulum membranes of newly synthesized membrane proteins. Preferentially accommodates proteins with transmembrane domains that are weakly hydrophobic or contain destabilizing features such as charged and aromatic residues. Involved in the cotranslational insertion of multi-pass membrane proteins in which stop-transfer membrane-anchor sequences become ER membrane spanning helices. It is also required for the post-translational insertion of tail-anchored/TA proteins in endoplasmic reticulum membranes. By mediating the proper cotranslational insertion of N-terminal transmembrane domains in an N-exo topology, with translocated N-terminus in the lumen of the ER, controls the topology of multi-pass membrane proteins like the G protein-coupled receptors. By regulating the insertion of various proteins in membranes, it is indirectly involved in many cellular processes. May be involved in Mg(2+) transport. The chain is ER membrane protein complex subunit 5 from Pongo abelii (Sumatran orangutan).